Reading from the N-terminus, the 860-residue chain is Probable leucine--tRNA ligase, cytoplasmic (860 aa).

The short motif at 41–51 (PYMNGKLHLGH) is the 'HIGH' region element. The 'KMSKS' region signature appears at 552 to 556 (KMSKS). Lys555 contacts ATP.

It belongs to the class-I aminoacyl-tRNA synthetase family.

It localises to the cytoplasm. It catalyses the reaction tRNA(Leu) + L-leucine + ATP = L-leucyl-tRNA(Leu) + AMP + diphosphate. In Enterocytozoon bieneusi (strain H348) (Microsporidian parasite), this protein is Probable leucine--tRNA ligase, cytoplasmic.